Here is a 400-residue protein sequence, read N- to C-terminus: Homoserine O-acetyltransferase (400 aa).

Residues 1–11 (MVKVQSIQSQA) are compositionally biased toward polar residues. The tract at residues 1–24 (MVKVQSIQSQAVHAEERAHEADHP) is disordered. Residues 13–23 (HAEERAHEADH) show a composition bias toward basic and acidic residues. In terms of domain architecture, AB hydrolase-1 spans 64–373 (NAILVCHALT…TDRGHDAFLL (310 aa)). Ser-169 functions as the Nucleophile in the catalytic mechanism. Arg-239 provides a ligand contact to substrate. Residues Asp-335 and His-368 contribute to the active site. Asp-369 provides a ligand contact to substrate.

The protein belongs to the AB hydrolase superfamily. MetX family. Homodimer.

Its subcellular location is the cytoplasm. The catalysed reaction is L-homoserine + acetyl-CoA = O-acetyl-L-homoserine + CoA. It participates in amino-acid biosynthesis; L-methionine biosynthesis via de novo pathway; O-acetyl-L-homoserine from L-homoserine: step 1/1. Transfers an acetyl group from acetyl-CoA to L-homoserine, forming acetyl-L-homoserine. The sequence is that of Homoserine O-acetyltransferase from Rhodopseudomonas palustris (strain BisB18).